The following is a 321-amino-acid chain: Methionyl-tRNA formyltransferase (321 aa).

113–116 (SILP) lines the (6S)-5,6,7,8-tetrahydrofolate pocket.

The protein belongs to the Fmt family.

It catalyses the reaction L-methionyl-tRNA(fMet) + (6R)-10-formyltetrahydrofolate = N-formyl-L-methionyl-tRNA(fMet) + (6S)-5,6,7,8-tetrahydrofolate + H(+). In terms of biological role, attaches a formyl group to the free amino group of methionyl-tRNA(fMet). The formyl group appears to play a dual role in the initiator identity of N-formylmethionyl-tRNA by promoting its recognition by IF2 and preventing the misappropriation of this tRNA by the elongation apparatus. This chain is Methionyl-tRNA formyltransferase, found in Vibrio atlanticus (strain LGP32) (Vibrio splendidus (strain Mel32)).